Here is a 330-residue protein sequence, read N- to C-terminus: 2-methoxy-6-polyprenyl-1,4-benzoquinol methylase, mitochondrial (330 aa).

Residues Met-1–Leu-42 constitute a mitochondrion transit peptide. S-adenosyl-L-methionine is bound by residues Thr-117, Asp-171, and Asp-199–Ala-200.

This sequence belongs to the class I-like SAM-binding methyltransferase superfamily. MenG/UbiE family. Component of a multi-subunit COQ enzyme complex, composed of at least COQ3, COQ4, COQ5, COQ6, COQ7 and COQ9. Interacts with PYURF; the interaction is direct, stabilizes COQ5 protein and associates PYURF with COQ enzyme complex.

Its subcellular location is the mitochondrion inner membrane. The catalysed reaction is 2-methoxy-6-(all-trans-decaprenyl)benzene-1,4-diol + S-adenosyl-L-methionine = 5-methoxy-2-methyl-3-(all-trans-decaprenyl)benzene-1,4-diol + S-adenosyl-L-homocysteine + H(+). Its pathway is cofactor biosynthesis; ubiquinone biosynthesis. Its function is as follows. Methyltransferase required for the conversion of 2-decaprenyl-6-methoxy-1,4-benzoquinol (DDMQH2) to 2-decaprenyl-3-methyl-6-methoxy-1,4-benzoquinol (DMQH2). The sequence is that of 2-methoxy-6-polyprenyl-1,4-benzoquinol methylase, mitochondrial from Bos taurus (Bovine).